The following is an 855-amino-acid chain: DNA mismatch repair protein MutS (855 aa).

613–620 (GPNMGGKS) lines the ATP pocket. Residues 795-816 (ETTSLPHEVPSQQSGKPASPMQ) form a disordered region. Polar residues predominate over residues 796 to 816 (TTSLPHEVPSQQSGKPASPMQ).

The protein belongs to the DNA mismatch repair MutS family.

This protein is involved in the repair of mismatches in DNA. It is possible that it carries out the mismatch recognition step. This protein has a weak ATPase activity. In Pseudomonas paraeruginosa (strain DSM 24068 / PA7) (Pseudomonas aeruginosa (strain PA7)), this protein is DNA mismatch repair protein MutS.